The primary structure comprises 279 residues: Acetylglutamate kinase (279 aa).

Residues 64–65 (GG), R86, and N177 each bind substrate.

This sequence belongs to the acetylglutamate kinase family. ArgB subfamily.

Its subcellular location is the cytoplasm. The enzyme catalyses N-acetyl-L-glutamate + ATP = N-acetyl-L-glutamyl 5-phosphate + ADP. The protein operates within amino-acid biosynthesis; L-arginine biosynthesis; N(2)-acetyl-L-ornithine from L-glutamate: step 2/4. In terms of biological role, catalyzes the ATP-dependent phosphorylation of N-acetyl-L-glutamate. The chain is Acetylglutamate kinase from Campylobacter jejuni subsp. jejuni serotype O:23/36 (strain 81-176).